Consider the following 244-residue polypeptide: Proteasome subunit alpha (244 aa).

It belongs to the peptidase T1A family. In terms of assembly, the 20S proteasome core is composed of 14 alpha and 14 beta subunits that assemble into four stacked heptameric rings, resulting in a barrel-shaped structure. The two inner rings, each composed of seven catalytic beta subunits, are sandwiched by two outer rings, each composed of seven alpha subunits. The catalytic chamber with the active sites is on the inside of the barrel. Has a gated structure, the ends of the cylinder being occluded by the N-termini of the alpha-subunits. Is capped by the proteasome-associated ATPase, ARC.

It is found in the cytoplasm. Its pathway is protein degradation; proteasomal Pup-dependent pathway. With respect to regulation, the formation of the proteasomal ATPase ARC-20S proteasome complex, likely via the docking of the C-termini of ARC into the intersubunit pockets in the alpha-rings, may trigger opening of the gate for substrate entry. Interconversion between the open-gate and close-gate conformations leads to a dynamic regulation of the 20S proteasome proteolysis activity. Component of the proteasome core, a large protease complex with broad specificity involved in protein degradation. This is Proteasome subunit alpha from Xylanimonas cellulosilytica (strain DSM 15894 / JCM 12276 / CECT 5975 / KCTC 9989 / LMG 20990 / NBRC 107835 / XIL07).